The following is a 389-amino-acid chain: Shewanella-like protein phosphatase 1 (389 aa).

The transit peptide at 1–53 (MASLYLNSLLPLPPSHPQKLLEPSSSSLLSTSNGNELALKPIVINGDPPTFVS) directs the protein to the chloroplast. Mn(2+) contacts are provided by aspartate 64, histidine 66, aspartate 102, and asparagine 137. Histidine 138 functions as the Proton donor in the catalytic mechanism. The Mn(2+) site is built by histidine 242 and histidine 314.

It belongs to the metallophosphoesterase superfamily. SLP family. It depends on Mn(2+) as a cofactor. As to expression, expressed in rosettes leaves, shoots and flowers (at protein level).

The protein resides in the plastid. The protein localises to the chloroplast. In terms of biological role, shows phosphatase activity, hydrolyzing the artificial substrate para-nitrophenylphosphate (pNPP) in vitro. This Arabidopsis thaliana (Mouse-ear cress) protein is Shewanella-like protein phosphatase 1.